A 176-amino-acid polypeptide reads, in one-letter code: Adenylyl-sulfate kinase (176 aa).

An ATP-binding site is contributed by Gly12–Thr19. Catalysis depends on Ser86, which acts as the Phosphoserine intermediate.

Belongs to the APS kinase family.

It carries out the reaction adenosine 5'-phosphosulfate + ATP = 3'-phosphoadenylyl sulfate + ADP + H(+). Its pathway is sulfur metabolism; hydrogen sulfide biosynthesis; sulfite from sulfate: step 2/3. In terms of biological role, catalyzes the synthesis of activated sulfate. The chain is Adenylyl-sulfate kinase from Synechococcus sp. (strain JA-3-3Ab) (Cyanobacteria bacterium Yellowstone A-Prime).